We begin with the raw amino-acid sequence, 1465 residues long: DNA polymerase III PolC-type (1465 aa).

In terms of domain architecture, Exonuclease spans 427–583 (YVVFDVETTG…YDAEATGRLL (157 aa)).

This sequence belongs to the DNA polymerase type-C family. PolC subfamily.

The protein localises to the cytoplasm. It carries out the reaction DNA(n) + a 2'-deoxyribonucleoside 5'-triphosphate = DNA(n+1) + diphosphate. In terms of biological role, required for replicative DNA synthesis. This DNA polymerase also exhibits 3' to 5' exonuclease activity. This is DNA polymerase III PolC-type from Streptococcus pyogenes serotype M1.